A 353-amino-acid polypeptide reads, in one-letter code: Quinolinate synthase (353 aa).

Iminosuccinate contacts are provided by histidine 47 and serine 68. Residue cysteine 113 participates in [4Fe-4S] cluster binding. Residues 139–141 (YAN) and serine 156 contribute to the iminosuccinate site. Residue cysteine 200 participates in [4Fe-4S] cluster binding. Iminosuccinate is bound by residues 226-228 (HPE) and threonine 243. Cysteine 297 lines the [4Fe-4S] cluster pocket.

The protein belongs to the quinolinate synthase family. Type 1 subfamily. Requires [4Fe-4S] cluster as cofactor.

It is found in the cytoplasm. It carries out the reaction iminosuccinate + dihydroxyacetone phosphate = quinolinate + phosphate + 2 H2O + H(+). Its pathway is cofactor biosynthesis; NAD(+) biosynthesis; quinolinate from iminoaspartate: step 1/1. Catalyzes the condensation of iminoaspartate with dihydroxyacetone phosphate to form quinolinate. The sequence is that of Quinolinate synthase from Vibrio parahaemolyticus serotype O3:K6 (strain RIMD 2210633).